Here is a 211-residue protein sequence, read N- to C-terminus: Histone H1t (211 aa).

An N-acetylalanine modification is found at Ala-1. Positions 1–16 are enriched in low complexity; sequence AETAPAAPADSVPASV. Residues 1 to 42 form a disordered region; that stretch reads AETAPAAPADSVPASVEKPPAKKRGKKPVGLTGTSRKAPSAS. The segment covering 32-42 has biased composition (polar residues); the sequence is TGTSRKAPSAS. One can recognise an H15 domain in the interval 39–112; the sequence is PSASVSKLIT…GASGSFKLSK (74 aa). The residue at position 57 (Arg-57) is a Citrulline. A disordered region spans residues 101-211; the sequence is GTGASGSFKL…TNPRKATNRK (111 aa). The span at 121–135 shows a compositional bias: basic residues; the sequence is GKVKKPAAAKTKKLV. Phosphoserine is present on Ser-142. The span at 147–156 shows a compositional bias: basic residues; sequence KANKRAKKSR. At Thr-158 the chain carries Phosphothreonine. A phosphoserine mark is found at Ser-166 and Ser-181. Residues 176-189 show a composition bias toward basic residues; that stretch reads KQQRKSPAKARAAK.

This sequence belongs to the histone H1/H5 family. Post-translationally, phosphorylated in early spermatids. In terms of processing, citrullination at Arg-57 (H1R54ci) by PADI4 takes place within the DNA-binding site of H1 and results in its displacement from chromatin and global chromatin decondensation, thereby promoting pluripotency and stem cell maintenance. As to expression, testis-specific.

The protein resides in the nucleus. Its subcellular location is the chromosome. Its function is as follows. Testis-specific histone H1 that forms less compacted chromatin compared to other H1 histone subtypes. Formation of more relaxed chromatin may be required to promote chromatin architecture required for proper chromosome regulation during meiosis, such as homologous recombination. Histones H1 act as linkers that bind to nucleosomes and compact polynucleosomes into a higher-order chromatin configuration. In Sus scrofa (Pig), this protein is Histone H1t.